A 146-amino-acid chain; its full sequence is Universal stress protein A homolog 2 (146 aa).

The protein belongs to the universal stress protein A family. In terms of assembly, homodimer.

The protein localises to the cytoplasm. In terms of biological role, involved in stress response. In Coxiella burnetii (strain RSA 493 / Nine Mile phase I), this protein is Universal stress protein A homolog 2 (uspA2).